A 72-amino-acid chain; its full sequence is Small ribosomal subunit protein bS18 (72 aa).

It belongs to the bacterial ribosomal protein bS18 family. As to quaternary structure, part of the 30S ribosomal subunit. Forms a tight heterodimer with protein bS6.

Its function is as follows. Binds as a heterodimer with protein bS6 to the central domain of the 16S rRNA, where it helps stabilize the platform of the 30S subunit. This chain is Small ribosomal subunit protein bS18, found in Francisella philomiragia subsp. philomiragia (strain ATCC 25017 / CCUG 19701 / FSC 153 / O#319-036).